The chain runs to 124 residues: Small ribosomal subunit protein uS12 (124 aa).

3-methylthioaspartic acid is present on Asp89. Lys108 carries the post-translational modification N6-acetyllysine.

The protein belongs to the universal ribosomal protein uS12 family. In terms of assembly, part of the 30S ribosomal subunit. Contacts proteins S8 and S17. May interact with IF1 in the 30S initiation complex.

Its function is as follows. With S4 and S5 plays an important role in translational accuracy. Functionally, interacts with and stabilizes bases of the 16S rRNA that are involved in tRNA selection in the A site and with the mRNA backbone. Located at the interface of the 30S and 50S subunits, it traverses the body of the 30S subunit contacting proteins on the other side and probably holding the rRNA structure together. The combined cluster of proteins S8, S12 and S17 appears to hold together the shoulder and platform of the 30S subunit. In Escherichia coli O139:H28 (strain E24377A / ETEC), this protein is Small ribosomal subunit protein uS12.